The chain runs to 354 residues: Uroporphyrinogen decarboxylase (354 aa).

Residues 27–31 (RQAGR), D77, Y154, T209, and H327 contribute to the substrate site.

The protein belongs to the uroporphyrinogen decarboxylase family. As to quaternary structure, homodimer.

The protein resides in the cytoplasm. It catalyses the reaction uroporphyrinogen III + 4 H(+) = coproporphyrinogen III + 4 CO2. It functions in the pathway porphyrin-containing compound metabolism; protoporphyrin-IX biosynthesis; coproporphyrinogen-III from 5-aminolevulinate: step 4/4. In terms of biological role, catalyzes the decarboxylation of four acetate groups of uroporphyrinogen-III to yield coproporphyrinogen-III. This is Uroporphyrinogen decarboxylase from Actinobacillus succinogenes (strain ATCC 55618 / DSM 22257 / CCUG 43843 / 130Z).